The following is a 671-amino-acid chain: Kinesin-like protein KIF2C (671 aa).

Residues 1-200 are globular; that stretch reads MIDIDDVAAI…CNPLTVTDPI (200 aa). The disordered stretch occupies residues 37–58; sequence QKRKSVNSKIPGPKEGLRSRST. S41 is modified (phosphoserine; by AURKB). A Microtubule tip localization signal motif is present at residues 44-47; that stretch reads SKIP. A phosphoserine mark is found at S55, S57, S61, S112, S121, S133, and S138. The disordered stretch occupies residues 115–138; it reads AEEQAHSTRSTSSANPGNSVRRKS. Polar residues predominate over residues 121 to 132; sequence STRSTSSANPGN. The interval 153 to 184 is negative regulator of microtubule-binding; it reads EKRAQNSEIRIKRAQEYDNSFPNWEFARMIKE. One can recognise a Kinesin motor domain in the interval 204 to 534; it reads RICVCVRKRP…LRYADRVKEL (331 aa). ATP-binding positions include R210 and 294 to 301; that span reads GQTGSGKT. S465 carries the phosphoserine modification. The disordered stretch occupies residues 533 to 568; it reads ELSPHSGPSGEQAVQMETEEMDASSHGASLTGNEEE. Residues 566–601 are a coiled coil; the sequence is EEEELSSQMSSFNEAMTQIRELEERAMEELREIIQQ. Position 576 is a phosphoserine (S576).

It belongs to the TRAFAC class myosin-kinesin ATPase superfamily. Kinesin family. MCAK/KIF2 subfamily. Interacts with CENPH. Interacts with MTUS2/TIP150; the interaction is direct. Interacts with MAPRE1; the interaction is direct, regulated by phosphorylation and is probably required for targeting to growing microtubule plus ends. Interacts with KIF18B at microtubule tips; this interaction increases the affinity of both partners for microtubule plus ends and is required for robust microtubule depolymerization. Phosphorylation by AURKA or AURKB strongly reduces KIF18B-binding. Phosphorylation by AURKB, regulates association with centromeres and kinetochores and the microtubule depolymerization activity. Post-translationally, ubiquitinated. As to expression, testis. Localized to the meiotically active cells of the seminiferous epithelia in the testis.

The protein localises to the cytoplasm. Its subcellular location is the cytoskeleton. The protein resides in the nucleus. It localises to the chromosome. It is found in the centromere. The protein localises to the kinetochore. Its function is as follows. In complex with KIF18B, constitutes the major microtubule plus-end depolymerizing activity in mitotic cells. Regulates the turnover of microtubules at the kinetochore and functions in chromosome segregation during mitosis. Plays a role in chromosome congression and is required for the lateral to end-on conversion of the chromosome-microtubule attachment. In Rattus norvegicus (Rat), this protein is Kinesin-like protein KIF2C (Kif2c).